A 363-amino-acid chain; its full sequence is 3-isopropylmalate dehydrogenase (363 aa).

76 to 89 (GPKWDTLPGHLRPE) contacts NAD(+). The substrate site is built by Arg-96, Arg-106, Arg-134, and Asp-223. Mg(2+) contacts are provided by Asp-223, Asp-247, and Asp-251. Position 281-293 (281-293 (GSAPDIAGKGVAN)) interacts with NAD(+).

It belongs to the isocitrate and isopropylmalate dehydrogenases family. LeuB type 1 subfamily. In terms of assembly, homodimer. Requires Mg(2+) as cofactor. Mn(2+) is required as a cofactor.

Its subcellular location is the cytoplasm. The enzyme catalyses (2R,3S)-3-isopropylmalate + NAD(+) = 4-methyl-2-oxopentanoate + CO2 + NADH. The protein operates within amino-acid biosynthesis; L-leucine biosynthesis; L-leucine from 3-methyl-2-oxobutanoate: step 3/4. In terms of biological role, catalyzes the oxidation of 3-carboxy-2-hydroxy-4-methylpentanoate (3-isopropylmalate) to 3-carboxy-4-methyl-2-oxopentanoate. The product decarboxylates to 4-methyl-2 oxopentanoate. The chain is 3-isopropylmalate dehydrogenase from Halalkalibacterium halodurans (strain ATCC BAA-125 / DSM 18197 / FERM 7344 / JCM 9153 / C-125) (Bacillus halodurans).